Consider the following 375-residue polypeptide: Succinyl-diaminopimelate desuccinylase (375 aa).

H66 is a Zn(2+) binding site. D68 is an active-site residue. D99 contributes to the Zn(2+) binding site. E133 (proton acceptor) is an active-site residue. Residues E134, E162, and H348 each coordinate Zn(2+).

Belongs to the peptidase M20A family. DapE subfamily. As to quaternary structure, homodimer. Requires Zn(2+) as cofactor. The cofactor is Co(2+).

It carries out the reaction N-succinyl-(2S,6S)-2,6-diaminopimelate + H2O = (2S,6S)-2,6-diaminopimelate + succinate. Its pathway is amino-acid biosynthesis; L-lysine biosynthesis via DAP pathway; LL-2,6-diaminopimelate from (S)-tetrahydrodipicolinate (succinylase route): step 3/3. Its function is as follows. Catalyzes the hydrolysis of N-succinyl-L,L-diaminopimelic acid (SDAP), forming succinate and LL-2,6-diaminopimelate (DAP), an intermediate involved in the bacterial biosynthesis of lysine and meso-diaminopimelic acid, an essential component of bacterial cell walls. This chain is Succinyl-diaminopimelate desuccinylase, found in Escherichia coli O1:K1 / APEC.